Here is an 845-residue protein sequence, read N- to C-terminus: Proto-oncogene vav (845 aa).

The Calponin-homology (CH) domain occupies 1–119 (MELWRQCTHW…YTLSALSWTP (119 aa)). The DH domain occupies 194 to 373 (KRCCCLREIQ…RDLAQCVNEV (180 aa)). In terms of domain architecture, PH spans 402-504 (RPKIDGELKI…WMEQFEMAIS (103 aa)). Residues 515-564 (GHDFQMFSFEETTSCKACQMLLRGTFYQGYRCYRCRAPAHKECLGRVPPC) form a Phorbol-ester/DAG-type zinc finger. In terms of domain architecture, SH3 1 spans 592–660 (LGLPKMEVFQ…PCNRVHPYVH (69 aa)). Residues 671 to 765 (WYAGPMERAG…SLDTTLQFPY (95 aa)) form the SH2 domain. One can recognise an SH3 2 domain in the interval 782–842 (KYFGTAKARY…PSNYVEEDYS (61 aa)). Phosphotyrosine is present on residues Tyr-826 and Tyr-844.

As to quaternary structure, interacts with SHB. Interacts with APS, DOCK2, GRB2, GRB3, DOCK2, SLA, TEC and ZNF655/VIK. Interacts with SIAH2; without leading to its degradation. Associates with BLNK, PLCG1, GRB2 and NCK1 in a B-cell antigen receptor-dependent fashion. Interacts with CBLB; which inhibits tyrosine phosphorylation and down-regulates activity. May interact with CCPG1. Interacts with CLNK. Interacts with THEMIS2. Interacts with NEK3 and this interaction is prolactin-dependent. Interacts with ITK. Interacts with PTK2B/PYK2. Interacts with HCK. Interacts with PTK2B/PYK2. Interacts (via SH2 domain) with SYK. Interacts with ANKRD54. Interacts with CD6. Interacts with isoform 2 of CRACR2A. Interacts with LCP2; this interaction plays a role in TCR-mediated cytokine production. Post-translationally, phosphorylated by FYN. Phosphorylated on tyrosine residues by HCK in response to IFNG and bacterial lipopolysaccharide (LPS). In terms of tissue distribution, widely expressed in hematopoietic cells but not in other cell types. Found in the spleen and lung.

In terms of biological role, couples tyrosine kinase signals with the activation of the Rho/Rac GTPases, thus leading to cell differentiation and/or proliferation. The sequence is that of Proto-oncogene vav (Vav1) from Mus musculus (Mouse).